We begin with the raw amino-acid sequence, 402 residues long: Phosphoglycerate kinase (402 aa).

Residues 24 to 26 (DFN), R40, 63 to 66 (HFGR), R122, and R155 contribute to the substrate site. ATP-binding positions include K206, G297, E328, and 357 to 360 (GGDS).

It belongs to the phosphoglycerate kinase family. Monomer.

Its subcellular location is the cytoplasm. It carries out the reaction (2R)-3-phosphoglycerate + ATP = (2R)-3-phospho-glyceroyl phosphate + ADP. The protein operates within carbohydrate degradation; glycolysis; pyruvate from D-glyceraldehyde 3-phosphate: step 2/5. The chain is Phosphoglycerate kinase from Prochlorococcus marinus (strain MIT 9211).